A 221-amino-acid polypeptide reads, in one-letter code: Germin-like protein 5-1 (221 aa).

Residues 1-25 (MARPSLPCAVVAVLLLALLPTPSTA) form the signal peptide. Cys35 and Cys50 are oxidised to a cystine. Positions 62–210 (KGLAAAGNTN…AFQVGTKEVE (149 aa)) constitute a Cupin type-1 domain. An N-linked (GlcNAc...) asparagine glycan is attached at Asn71. The Mn(2+) site is built by His110, His112, Glu117, and His156.

This sequence belongs to the germin family. In terms of assembly, oligomer (believed to be a pentamer but probably hexamer).

The protein resides in the secreted. It localises to the extracellular space. Its subcellular location is the apoplast. Its function is as follows. May play a role in plant defense. Probably has no oxalate oxidase activity even if the active site is conserved. This chain is Germin-like protein 5-1, found in Oryza sativa subsp. japonica (Rice).